The primary structure comprises 334 residues: Holliday junction branch migration complex subunit RuvB (334 aa).

Positions 1–182 (MDERLVSSEA…FGVLSRLEYY (182 aa)) are large ATPase domain (RuvB-L). Residues leucine 21, arginine 22, glycine 63, lysine 66, threonine 67, threonine 68, 129-131 (EDF), arginine 172, tyrosine 182, and arginine 219 each bind ATP. A Mg(2+)-binding site is contributed by threonine 67. The segment at 183 to 253 (TQEELTDIVS…IAHDALERLQ (71 aa)) is small ATPAse domain (RuvB-S). Residues 256–334 (ALGLDHIDHK…HFRLEAPARD (79 aa)) are head domain (RuvB-H). Arginine 311 and arginine 316 together coordinate DNA.

The protein belongs to the RuvB family. In terms of assembly, homohexamer. Forms an RuvA(8)-RuvB(12)-Holliday junction (HJ) complex. HJ DNA is sandwiched between 2 RuvA tetramers; dsDNA enters through RuvA and exits via RuvB. An RuvB hexamer assembles on each DNA strand where it exits the tetramer. Each RuvB hexamer is contacted by two RuvA subunits (via domain III) on 2 adjacent RuvB subunits; this complex drives branch migration. In the full resolvosome a probable DNA-RuvA(4)-RuvB(12)-RuvC(2) complex forms which resolves the HJ.

It is found in the cytoplasm. The enzyme catalyses ATP + H2O = ADP + phosphate + H(+). Functionally, the RuvA-RuvB-RuvC complex processes Holliday junction (HJ) DNA during genetic recombination and DNA repair, while the RuvA-RuvB complex plays an important role in the rescue of blocked DNA replication forks via replication fork reversal (RFR). RuvA specifically binds to HJ cruciform DNA, conferring on it an open structure. The RuvB hexamer acts as an ATP-dependent pump, pulling dsDNA into and through the RuvAB complex. RuvB forms 2 homohexamers on either side of HJ DNA bound by 1 or 2 RuvA tetramers; 4 subunits per hexamer contact DNA at a time. Coordinated motions by a converter formed by DNA-disengaged RuvB subunits stimulates ATP hydrolysis and nucleotide exchange. Immobilization of the converter enables RuvB to convert the ATP-contained energy into a lever motion, pulling 2 nucleotides of DNA out of the RuvA tetramer per ATP hydrolyzed, thus driving DNA branch migration. The RuvB motors rotate together with the DNA substrate, which together with the progressing nucleotide cycle form the mechanistic basis for DNA recombination by continuous HJ branch migration. Branch migration allows RuvC to scan DNA until it finds its consensus sequence, where it cleaves and resolves cruciform DNA. This is Holliday junction branch migration complex subunit RuvB from Bacillus velezensis (strain DSM 23117 / BGSC 10A6 / LMG 26770 / FZB42) (Bacillus amyloliquefaciens subsp. plantarum).